A 380-amino-acid chain; its full sequence is Actin-like protein (380 aa).

The protein belongs to the actin family. ARP1 subfamily.

Its subcellular location is the cytoplasm. It is found in the cytoskeleton. Functionally, involved in nuclear migration. May function as a component of the dynactin complex which activates force generation by cytoplasmic dynein. The protein is Actin-like protein (ro-4) of Neurospora crassa (strain ATCC 24698 / 74-OR23-1A / CBS 708.71 / DSM 1257 / FGSC 987).